The chain runs to 79 residues: Acyl carrier protein (79 aa).

In terms of domain architecture, Carrier spans 2 to 77 (SEIGERVKKI…DATKFLEKNA (76 aa)). Position 37 is an O-(pantetheine 4'-phosphoryl)serine (serine 37).

This sequence belongs to the acyl carrier protein (ACP) family. 4'-phosphopantetheine is transferred from CoA to a specific serine of apo-ACP by AcpS. This modification is essential for activity because fatty acids are bound in thioester linkage to the sulfhydryl of the prosthetic group.

The protein resides in the cytoplasm. The protein operates within lipid metabolism; fatty acid biosynthesis. In terms of biological role, carrier of the growing fatty acid chain in fatty acid biosynthesis. This chain is Acyl carrier protein, found in Afipia carboxidovorans (strain ATCC 49405 / DSM 1227 / KCTC 32145 / OM5) (Oligotropha carboxidovorans).